A 142-amino-acid chain; its full sequence is Large ribosomal subunit protein uL13 (142 aa).

Belongs to the universal ribosomal protein uL13 family. In terms of assembly, part of the 50S ribosomal subunit.

In terms of biological role, this protein is one of the early assembly proteins of the 50S ribosomal subunit, although it is not seen to bind rRNA by itself. It is important during the early stages of 50S assembly. This is Large ribosomal subunit protein uL13 from Xanthomonas oryzae pv. oryzae (strain MAFF 311018).